The following is a 117-amino-acid chain: Large ribosomal subunit protein uL18 (117 aa).

Belongs to the universal ribosomal protein uL18 family. Part of the 50S ribosomal subunit; part of the 5S rRNA/L5/L18/L25 subcomplex. Contacts the 5S and 23S rRNAs.

Functionally, this is one of the proteins that bind and probably mediate the attachment of the 5S RNA into the large ribosomal subunit, where it forms part of the central protuberance. This is Large ribosomal subunit protein uL18 from Thiobacillus denitrificans (strain ATCC 25259 / T1).